We begin with the raw amino-acid sequence, 370 residues long: MQTAARRSFDYDMPLIQTPTSACQIRQAWAKVADTPDRETAGRLKDEIKALLKEKNAVLVAHYYVDPLIQDLALETGGCVGDSLEMARFGAEHEADTLVVAGVRFMGESAKILCPEKTVLMPDLEAECSLDLGCPEEAFSAFCDQHPDRTVVVYANTSAAVKARADWVVTSSVALEIVSYLKSRGEKLIWGPDRHLGDYICRETGADMLLWQGSCIVHNEFKGQELAALKAEHPDAVVLVHPESPQSVIELGDVVGSTSKLLKAAVSRPEKKFIVATDLGILHEMQKQAPDKEFIAAPTAGNGGSCKSCAFCPWMAMNSLGGIKYALTSGRNEILLDRKLGEAAKLPLQRMLDFAAGLKRGDVFNGMGPA.

Positions 62 and 83 each coordinate iminosuccinate. Cys-128 is a [4Fe-4S] cluster binding site. Residues 154–156 (YAN) and Ser-171 each bind iminosuccinate. Residue Cys-215 coordinates [4Fe-4S] cluster. Iminosuccinate is bound by residues 241–243 (HPE) and Thr-258. Cys-312 contributes to the [4Fe-4S] cluster binding site.

It belongs to the quinolinate synthase family. Type 1 subfamily. It depends on [4Fe-4S] cluster as a cofactor.

The protein resides in the cytoplasm. It carries out the reaction iminosuccinate + dihydroxyacetone phosphate = quinolinate + phosphate + 2 H2O + H(+). The protein operates within cofactor biosynthesis; NAD(+) biosynthesis; quinolinate from iminoaspartate: step 1/1. Catalyzes the condensation of iminoaspartate with dihydroxyacetone phosphate to form quinolinate. In Neisseria meningitidis serogroup C / serotype 2a (strain ATCC 700532 / DSM 15464 / FAM18), this protein is Quinolinate synthase.